We begin with the raw amino-acid sequence, 241 residues long: Sec-independent protein translocase protein TatC (241 aa).

6 helical membrane-spanning segments follow: residues 27–47 (LIIV…FSAG), 76–96 (LTMC…YEAF), 122–142 (FVAG…SIVI), 161–181 (IVTN…IIVL), 193–213 (LVKG…FFSP), and 217–237 (LFSQ…SMVL).

Belongs to the TatC family. Forms a complex with TatA.

Its subcellular location is the cell membrane. Functionally, part of the twin-arginine translocation (Tat) system that transports large folded proteins containing a characteristic twin-arginine motif in their signal peptide across membranes. The chain is Sec-independent protein translocase protein TatC from Methanocella arvoryzae (strain DSM 22066 / NBRC 105507 / MRE50).